An 812-amino-acid polypeptide reads, in one-letter code: Valine--tRNA ligase (812 aa).

A 'HIGH' region motif is present at residues 46-56 (PTVSGQLHIGH). The 'KMSKS' region motif lies at 536-540 (KMSKS). Lys539 contributes to the ATP binding site.

The protein belongs to the class-I aminoacyl-tRNA synthetase family. ValS type 2 subfamily. As to quaternary structure, monomer.

The protein resides in the cytoplasm. The catalysed reaction is tRNA(Val) + L-valine + ATP = L-valyl-tRNA(Val) + AMP + diphosphate. Catalyzes the attachment of valine to tRNA(Val). As ValRS can inadvertently accommodate and process structurally similar amino acids such as threonine, to avoid such errors, it has a 'posttransfer' editing activity that hydrolyzes mischarged Thr-tRNA(Val) in a tRNA-dependent manner. The polypeptide is Valine--tRNA ligase (Rickettsia rickettsii (strain Iowa)).